A 417-amino-acid polypeptide reads, in one-letter code: Serine hydroxymethyltransferase 1 (417 aa).

(6S)-5,6,7,8-tetrahydrofolate is bound by residues L121 and 125-127 (GHL). K229 is modified (N6-(pyridoxal phosphate)lysine). 354–356 (SPF) contributes to the (6S)-5,6,7,8-tetrahydrofolate binding site.

The protein belongs to the SHMT family. Homodimer. Pyridoxal 5'-phosphate is required as a cofactor.

Its subcellular location is the cytoplasm. The catalysed reaction is (6R)-5,10-methylene-5,6,7,8-tetrahydrofolate + glycine + H2O = (6S)-5,6,7,8-tetrahydrofolate + L-serine. Its pathway is one-carbon metabolism; tetrahydrofolate interconversion. It functions in the pathway amino-acid biosynthesis; glycine biosynthesis; glycine from L-serine: step 1/1. Functionally, catalyzes the reversible interconversion of serine and glycine with tetrahydrofolate (THF) serving as the one-carbon carrier. This reaction serves as the major source of one-carbon groups required for the biosynthesis of purines, thymidylate, methionine, and other important biomolecules. Also exhibits THF-independent aldolase activity toward beta-hydroxyamino acids, producing glycine and aldehydes, via a retro-aldol mechanism. This Pseudomonas fluorescens (strain ATCC BAA-477 / NRRL B-23932 / Pf-5) protein is Serine hydroxymethyltransferase 1.